A 491-amino-acid polypeptide reads, in one-letter code: Protein DETOXIFICATION 28 (491 aa).

The next 12 helical transmembrane spans lie at 47–67, 77–97, 127–147, 160–180, 192–212, 228–248, 272–292, 302–322, 352–372, 387–407, 414–434, and 444–464; these read IVGPAIFTRVTTNLIFVITQA, LAAISIVNNVIIGFNYSLFIG, IVLFLFSILLLPMYIFATPIL, SGIISVWAIPTHFSFAFFFPI, VIAISSGVSLVVHIFVCWLFV, VSWWLNVFILFTYTTCGGCPL, GIMVCLENWYYRMLIVMTGNL, MSICMSINGLEMMVPLAFFAG, IIGIIISVLIYFLLDQIGWMF, ILLSFAILLNSVQPVLSGVAV, LVAFINLGCYYFIGLPLGIVM, and GIWAGMIFGGTMVQTLILIFI.

It belongs to the multi antimicrobial extrusion (MATE) (TC 2.A.66.1) family.

It is found in the membrane. This Arabidopsis thaliana (Mouse-ear cress) protein is Protein DETOXIFICATION 28.